The sequence spans 313 residues: S-methyl-5'-thioadenosine phosphorylase (313 aa).

Residues Thr20, 68–69 (RH), and 101–102 (SA) contribute to the phosphate site. Met203 is a substrate binding site. Ser204 is a phosphate binding site. 227–229 (DYD) provides a ligand contact to substrate.

The protein belongs to the PNP/MTAP phosphorylase family. MTAP subfamily. In terms of assembly, homotrimer.

It localises to the cytoplasm. The protein localises to the nucleus. It catalyses the reaction S-methyl-5'-thioadenosine + phosphate = 5-(methylsulfanyl)-alpha-D-ribose 1-phosphate + adenine. It functions in the pathway amino-acid biosynthesis; L-methionine biosynthesis via salvage pathway; S-methyl-5-thio-alpha-D-ribose 1-phosphate from S-methyl-5'-thioadenosine (phosphorylase route): step 1/1. Its function is as follows. Catalyzes the reversible phosphorylation of S-methyl-5'-thioadenosine (MTA) to adenine and 5-methylthioribose-1-phosphate. Involved in the breakdown of MTA, a major by-product of polyamine biosynthesis. Responsible for the first step in the methionine salvage pathway after MTA has been generated from S-adenosylmethionine. Has broad substrate specificity with 6-aminopurine nucleosides as preferred substrates. The protein is S-methyl-5'-thioadenosine phosphorylase of Ajellomyces capsulatus (strain G186AR / H82 / ATCC MYA-2454 / RMSCC 2432) (Darling's disease fungus).